A 538-amino-acid polypeptide reads, in one-letter code: Syncytin-2 (538 aa).

An N-terminal signal peptide occupies residues 1–15; sequence MGLLLLVLILTPLLA. Over 16-478 the chain is Extracellular; sequence AHRHPDFPLL…GWLNWEGTWK (463 aa). A CXXC motif is present at residues 43 to 46; it reads CWLC. Intrachain disulfides connect cysteine 43–cysteine 46, cysteine 43–cysteine 439, and cysteine 431–cysteine 438. Residues asparagine 133, asparagine 146, asparagine 177, asparagine 220, asparagine 241, asparagine 247, asparagine 312, and asparagine 332 are each glycosylated (N-linked (GlcNAc...) asparagine). Residues 354-374 are fusion peptide; that stretch reads FIPLLAGLGIIAGTGTGIAGI. The CKS-17 motif lies at 414 to 430; the sequence is LQNRRGLDMLTAAQGGI. The short motif at 431–439 is the CX6CC element; that stretch reads CLALDEKCC. Residue asparagine 443 is glycosylated (N-linked (GlcNAc...) asparagine). The chain crosses the membrane as a helical span at residues 479–499; that stretch reads WFSWVLPFTGPLVSLLLLLLF. The Cytoplasmic segment spans residues 500–538; that stretch reads GPCLLNLITQFVLSRLQAIKLQTNLSAGCRPHNIQESPF.

The protein belongs to the gamma type-C retroviral envelope protein family. HERV class-I FRD env subfamily. The surface and transmembrane proteins form a heterodimer. They are attached by non-covalent interactions or by a labile interchain disulfide bond. Post-translationally, specific enzymatic cleavages in vivo yield the mature SU and TM proteins. In terms of processing, the CXXC motif is highly conserved across a broad range of retroviral envelope proteins. It is thought to participate in the formation of a labile disulfide bond possibly with the CX6CC motif present in the transmembrane protein.

The protein resides in the virion. It is found in the cell membrane. Functionally, this endogenous retroviral envelope protein has retained its original fusogenic properties and participates in trophoblast fusion and the formation of a syncytium during placenta morphogenesis. The interaction with MFSD2A is apparently important for this process. Endogenous envelope proteins may have kept, lost or modified their original function during evolution but this one can still make pseudotypes with MLV, HIV-1 or SIV-1 virions and confer infectivity. Retroviral envelope proteins mediate receptor recognition and membrane fusion during early infection. The surface protein mediates receptor recognition, while the transmembrane protein anchors the envelope heterodimer to the viral membrane through one transmembrane domain. The other hydrophobic domain, called fusion peptide, mediates fusion of the viral membrane with the target cell membrane. The protein is Syncytin-2 (ERVFRD-1) of Pongo pygmaeus (Bornean orangutan).